Consider the following 496-residue polypeptide: Probable cytosol aminopeptidase (496 aa).

Residues Lys-261 and Asp-266 each contribute to the Mn(2+) site. Residue Lys-273 is part of the active site. Mn(2+)-binding residues include Asp-284, Asp-343, and Glu-345. Arg-347 is a catalytic residue.

The protein belongs to the peptidase M17 family. Mn(2+) is required as a cofactor.

The protein localises to the cytoplasm. The enzyme catalyses Release of an N-terminal amino acid, Xaa-|-Yaa-, in which Xaa is preferably Leu, but may be other amino acids including Pro although not Arg or Lys, and Yaa may be Pro. Amino acid amides and methyl esters are also readily hydrolyzed, but rates on arylamides are exceedingly low.. The catalysed reaction is Release of an N-terminal amino acid, preferentially leucine, but not glutamic or aspartic acids.. Presumably involved in the processing and regular turnover of intracellular proteins. Catalyzes the removal of unsubstituted N-terminal amino acids from various peptides. This chain is Probable cytosol aminopeptidase, found in Bacillus pumilus (strain SAFR-032).